Reading from the N-terminus, the 627-residue chain is Protein fem-1 homolog B (627 aa).

ANK repeat units follow at residues Gln-45–Gln-74, Asp-87–His-116, Thr-120–Ile-149, and Tyr-153–Ala-182. Zn(2+) is bound by residues His-185, Cys-186, and His-218. 2 ANK repeats span residues Cys-186–Val-215 and His-218–Ser-248. Residues Ser-344–Gly-377 form a TPR repeat. 2 ANK repeats span residues Glu-483–Ala-527 and Glu-531–Met-568.

It belongs to the fem-1 family. As to quaternary structure, component of a CRL2 E3 ubiquitin-protein ligase complex, also named ECS (Elongin BC-CUL2/5-SOCS-box protein) complex, composed of CUL2, Elongin BC (ELOB and ELOC), RBX1 and substrate-specific adapter FEM1B. Homooligomer. Interacts with PPM1F and PHTF1. Interacts with the death domain of FAS/TNFRSF6 and TNFRSF1A. Interacts with CHEK1. Interacts with NKX3-1. In terms of tissue distribution, expressed in pancreatic islets, within both beta cells and non-beta cells (at protein level). Highly expressed in adult testis; expressed in all types of spermatogonia. Also expressed in the prostate of neonatal mice.

The protein resides in the cytoplasm. It is found in the nucleus. Its pathway is protein modification; protein ubiquitination. Activity of the CRL2(FEM1B) complex toward FNIP1 is inhibited by BEX family proteins (BEX1, BEX2, BEX3 and/or BEX4) in absence of reductive stress. Mechanistically, BEX proteins act as pseudosubstrate inhibitors that associate with FEM1B via zinc in absence of reductive stress, thereby preventing association between FEM1B and FNIP1. In terms of biological role, substrate-recognition component of a Cul2-RING (CRL2) E3 ubiquitin-protein ligase complex of the DesCEND (destruction via C-end degrons) pathway, which recognizes a C-degron located at the extreme C terminus of target proteins, leading to their ubiquitination and degradation. The C-degron recognized by the DesCEND pathway is usually a motif of less than ten residues and can be present in full-length proteins, truncated proteins or proteolytically cleaved forms. The CRL2(FEM1B) complex specifically recognizes proteins ending with -Gly-Leu-Asp-Arg, such as CDK5R1, leading to their ubiquitination and degradation. Also acts as a regulator of the reductive stress response by mediating ubiquitination of reduced FNIP1: in response to reductive stress, the CRL2(FEM1B) complex specifically recognizes a conserved Cys degron in FNIP1 when this degron is reduced, leading to FNIP1 degradation and subsequent activation of mitochondria to recalibrate reactive oxygen species (ROS). Mechanistically, recognizes and binds reduced FNIP1 through two interface zinc ions, which act as a molecular glue that recruit reduced FNIP1 to FEM1B. Promotes ubiquitination of GLI1, suppressing GLI1 transcriptional activator activity. Promotes ubiquitination and degradation of ANKRD37. Promotes ubiquitination and degradation of SLBP. Involved in apoptosis by acting as a death receptor-associated protein that mediates apoptosis. Also involved in glucose homeostasis in pancreatic islet. May also act as an adapter/mediator in replication stress-induced signaling that leads to the activation of CHEK1. This chain is Protein fem-1 homolog B, found in Mus musculus (Mouse).